A 138-amino-acid chain; its full sequence is MRILWIVAVCLIGVEGNLFQFAKMINGKLGAFSVWNYISYGCYCGWGGQGTPKDATDRCCFVHDCCYGRVRGCNPKLAIYAYSFKKGNIVCGKNNGCLRDICECDRVAANCFHQNQNTYNKNYKFLSSSRCRQTSEQC.

A signal peptide spans 1–16 (MRILWIVAVCLIGVEG). 7 cysteine pairs are disulfide-bonded: Cys42-Cys131, Cys44-Cys60, Cys59-Cys111, Cys65-Cys138, Cys66-Cys104, Cys73-Cys97, and Cys91-Cys102. Positions 43, 45, and 47 each coordinate Ca(2+). His63 is an active-site residue. Residue Asp64 participates in Ca(2+) binding. Residue Asp105 is part of the active site.

As to quaternary structure, heterodimer; non-covalently linked. The toxic basic protein has phospholipase A2 activity (chain HDP-1P) and the non-toxic acidic protein functions as its inhibitor (chain HPD-1I (AC A4VBF0)). Ca(2+) is required as a cofactor. In terms of tissue distribution, expressed by the venom gland.

The protein localises to the secreted. The catalysed reaction is a 1,2-diacyl-sn-glycero-3-phosphocholine + H2O = a 1-acyl-sn-glycero-3-phosphocholine + a fatty acid + H(+). Its activity is regulated as follows. Enzymatic activity and neurotoxicity are inhibited by Triton X-100, which has been determined to be located in the center of the hydrophobic channel of the enzyme. In terms of biological role, heterodimer: shows the same activities as the monomer, but with a lower potency. Functionally, monomer: snake venom phospholipase A2 (PLA2) that shows presynaptic neurotoxicity, anticoagulant activity and that weakly inhibits ADP-induced platelet aggregation. Inhibits exocytosis in pancreatic beta cells, confirming it can act presynaptically in inhibiting the exocytosis of neurotransmitters in neurons. PLA2 catalyzes the calcium-dependent hydrolysis of the 2-acyl groups in 3-sn-phosphoglycerides. This chain is Basic phospholipase A2 chain HDP-1P, found in Vipera nikolskii (Nikolsky's adder).